The sequence spans 616 residues: MYKKLAIATLLYSADYLPGVFALGHQVNKLLEEAGKKGDIETCLIVTTSLFNGTLSELAKNILQSIYTKIVLVEPLNCQEESIQKNSENLALLERPELSFALIKARLWELTQFEQVLYLDSDTLPLNKEFLKLFDIMSKQTTSQVGAIADIGWPDMFNSGVMMLIPDADTASVLQNYIFENTSIDGSDQGILNQFFNQNCCTDELVKDSFSREWVQLSFTYNVTIPNLGYQSSPAMNYFKPSIKLIHFIGKHKPWSLWSQKNFIKNEYHDQWNEVYEEFKEEHQLNNEVSKPKISDSDKTETPETITPVDAPPSNEPTTNQEIDTISTVEENVDNQNAEPVPNSDHSPAPNPVPLDFTKWLTTFINKDHLTNQPVNESREYSKENDNNIINSSSNRDQESPPNSTQELNSSYSVVSTQADSDEHQNAEEEDSTTDNASNSGEESHLDDISTAASSNNNVSNQPDGKNFSNSKENNISVESSPSNPEQKRSTDNIQKPSVSTNDLPDDVEPHTSVDDNIQYLEKDKEGYEEFLPDVYESNAIDNEEEFFDDDARDATEGETKTSAVADKQEDMKLTAEETNQPQQEMPNFKFDWEDSDYLSKVERCFPDDIFEYAVE.

UDP contacts are provided by Leu10, Tyr16, and Arg95. UDP-alpha-D-glucose-binding residues include Leu10, Tyr16, Arg95, Lys104, Asp120, Asp122, Asn158, Ser159, Asp185, Asp188, and Gln189. Asp120 and Asp122 together coordinate UDP. Mn(2+) contacts are provided by Asp120 and Asp122. O-linked (Glc...) tyrosine glycosylation is present at Tyr230. His247, Gly250, and Lys253 together coordinate UDP. Residue His247 coordinates Mn(2+). UDP-alpha-D-glucose contacts are provided by Gly250 and Lys253. Positions 283-302 are enriched in basic and acidic residues; the sequence is HQLNNEVSKPKISDSDKTET. Disordered stretches follow at residues 283–320, 335–354, 371–525, and 553–588; these read HQLNNEVSKPKISDSDKTETPETITPVDAPPSNEPTTN, NQNAEPVPNSDHSPAPNPVP, TNQP…EKDK, and RDATEGETKTSAVADKQEDMKLTAEETNQPQQEMPN. Residues 377-386 are compositionally biased toward basic and acidic residues; sequence ESREYSKEND. Residues 400 to 419 are compositionally biased toward polar residues; it reads SPPNSTQELNSSYSVVSTQA. Low complexity predominate over residues 450-461; the sequence is STAASSNNNVSN. Composition is skewed to polar residues over residues 462 to 485 and 492 to 503; these read QPDGKNFSNSKENNISVESSPSNP and DNIQKPSVSTND. The span at 567–576 shows a compositional bias: basic and acidic residues; sequence DKQEDMKLTA. Residues 577-586 show a composition bias toward polar residues; it reads EETNQPQQEM. The O-linked (Glc...) tyrosine glycan is linked to Tyr598.

Belongs to the glycosyltransferase 8 family. Glycogenin subfamily. Requires Mn(2+) as cofactor.

It localises to the cytoplasm. Its subcellular location is the vacuole. The catalysed reaction is L-tyrosyl-[glycogenin] + UDP-alpha-D-glucose = alpha-D-glucosyl-L-tyrosyl-[glycogenin] + UDP + H(+). It carries out the reaction [1,4-alpha-D-glucosyl](n)-L-tyrosyl-[glycogenin] + UDP-alpha-D-glucose = [1,4-alpha-D-glucosyl](n+1)-L-tyrosyl-[glycogenin] + UDP + H(+). Functionally, self-glucosylating initiator of glycogen synthesis. It catalyzes the formation of a short alpha (1,4)-glucosyl chain covalently attached via a glucose 1-O-tyrosyl linkage to internal tyrosine residues and these chains act as primers for the elongation reaction catalyzed by glycogen synthase. Capable of transferring glucosyl residues to unbound acceptors such as free oligoglucans or oligoglucan derivatives. This is Glycogenin-1 from Saccharomyces cerevisiae (strain ATCC 204508 / S288c) (Baker's yeast).